The following is a 350-amino-acid chain: Deoxyribonuclease-2-alpha (350 aa).

A signal peptide spans 1–19 (MAAPSSLLLAALLWVPAEA). The cysteines at positions 22 and 162 are disulfide-linked. N-linked (GlcNAc...) asparagine glycans are attached at residues asparagine 89, asparagine 215, asparagine 269, and asparagine 293. 2 cysteine pairs are disulfide-bonded: cysteine 270-cysteine 350 and cysteine 311-cysteine 330. Residue histidine 298 is part of the active site.

This sequence belongs to the DNase II family. Ubiquitous.

The protein localises to the lysosome. The catalysed reaction is Endonucleolytic cleavage to nucleoside 3'-phosphates and 3'-phosphooligonucleotide end-products.. Functionally, hydrolyzes DNA under acidic conditions with a preference for double-stranded DNA. Plays a major role in the clearance of nucleic acids generated through apoptosis, hence preventing autoinflammation. Necessary for proper fetal development and for definitive erythropoiesis in fetal liver and bone marrow, where it degrades nuclear DNA expelled from erythroid precursor cells. This chain is Deoxyribonuclease-2-alpha (Dnase2), found in Rattus norvegicus (Rat).